The chain runs to 204 residues: Peptide deformylase (204 aa).

The Fe cation site is built by C131 and H174. E175 is an active-site residue. H178 lines the Fe cation pocket.

It belongs to the polypeptide deformylase family. The cofactor is Fe(2+).

The enzyme catalyses N-terminal N-formyl-L-methionyl-[peptide] + H2O = N-terminal L-methionyl-[peptide] + formate. In terms of biological role, removes the formyl group from the N-terminal Met of newly synthesized proteins. Requires at least a dipeptide for an efficient rate of reaction. N-terminal L-methionine is a prerequisite for activity but the enzyme has broad specificity at other positions. In Streptococcus pyogenes serotype M1, this protein is Peptide deformylase.